Consider the following 291-residue polypeptide: 4-hydroxy-tetrahydrodipicolinate synthase (291 aa).

T44 contacts pyruvate. The active-site Proton donor/acceptor is Y132. K160 acts as the Schiff-base intermediate with substrate in catalysis. Residue I202 participates in pyruvate binding.

The protein belongs to the DapA family. As to quaternary structure, homotetramer; dimer of dimers.

The protein resides in the cytoplasm. The catalysed reaction is L-aspartate 4-semialdehyde + pyruvate = (2S,4S)-4-hydroxy-2,3,4,5-tetrahydrodipicolinate + H2O + H(+). It functions in the pathway amino-acid biosynthesis; L-lysine biosynthesis via DAP pathway; (S)-tetrahydrodipicolinate from L-aspartate: step 3/4. Functionally, catalyzes the condensation of (S)-aspartate-beta-semialdehyde [(S)-ASA] and pyruvate to 4-hydroxy-tetrahydrodipicolinate (HTPA). This Zymomonas mobilis subsp. mobilis (strain ATCC 31821 / ZM4 / CP4) protein is 4-hydroxy-tetrahydrodipicolinate synthase.